The chain runs to 256 residues: MDPAPSLAAELWRPHHHRHHFEASSVVTDQGSGSRGGGGSGRRRPRSDAGPEDDDLSKVVSTSAASGGGGGGGQDSDAPEAKRLKPMKSSDKNDSLRTEAGTDSGNSSKAADKNATPPEPPKQDYIHVRARRGQATDSHSLAERARREKISERMKILQDLVPGCNKVIGKASVLDEIINYIQSLQHQVEFLSMKLEAVNSHMINGIVAFPSKDFGAQPYNTAAGLTFDPQTTREFAQGSTSEWLHMQIGNAYERVT.

The disordered stretch occupies residues 1 to 125 (MDPAPSLAAE…TPPEPPKQDY (125 aa)). Over residues 79-97 (PEAKRLKPMKSSDKNDSLR) the composition is skewed to basic and acidic residues. Positions 134-147 (QATDSHSLAERARR) are basic motif; degenerate. Residues 134–184 (QATDSHSLAERARREKISERMKILQDLVPGCNKVIGKASVLDEIINYIQSL) enclose the bHLH domain. The segment at 148–184 (EKISERMKILQDLVPGCNKVIGKASVLDEIINYIQSL) is helix-loop-helix motif.

It belongs to the bHLH protein family. As to quaternary structure, interacts with RSS3. Forms a ternary complex with RSS3 and TIFY11A/JAZ9 in the nucleus.

It is found in the nucleus. Transcription factor that forms a ternary complex with RSS3 and TIFY11A/JAZ9 to negatively regulate jasmonate-responsive genes. The protein is Transcription factor BHLH094 of Oryza sativa subsp. japonica (Rice).